The following is a 467-amino-acid chain: ATP synthase subunit beta (467 aa).

150–157 serves as a coordination point for ATP; sequence GGAGVGKT.

Belongs to the ATPase alpha/beta chains family. As to quaternary structure, F-type ATPases have 2 components, CF(1) - the catalytic core - and CF(0) - the membrane proton channel. CF(1) has five subunits: alpha(3), beta(3), gamma(1), delta(1), epsilon(1). CF(0) has three main subunits: a(1), b(2) and c(9-12). The alpha and beta chains form an alternating ring which encloses part of the gamma chain. CF(1) is attached to CF(0) by a central stalk formed by the gamma and epsilon chains, while a peripheral stalk is formed by the delta and b chains.

Its subcellular location is the cell inner membrane. It catalyses the reaction ATP + H2O + 4 H(+)(in) = ADP + phosphate + 5 H(+)(out). In terms of biological role, produces ATP from ADP in the presence of a proton gradient across the membrane. The catalytic sites are hosted primarily by the beta subunits. This chain is ATP synthase subunit beta, found in Aliivibrio salmonicida (strain LFI1238) (Vibrio salmonicida (strain LFI1238)).